The primary structure comprises 148 residues: MSRRLARETALQVLFQLEMTGESQDLKSAIHKWADEFAVPEGSIPFAEELAEGTLTHKEVIDENLEKLSEGWSLARMANVDRNLLRLASYEILFRKDIPGRVTINEAIEIAKRYGSEESGKFINGILDKVVESVNKKDEKGNDTLSRD.

The protein belongs to the NusB family.

Its function is as follows. Involved in transcription antitermination. Required for transcription of ribosomal RNA (rRNA) genes. Binds specifically to the boxA antiterminator sequence of the ribosomal RNA (rrn) operons. The sequence is that of Transcription antitermination protein NusB from Desulfitobacterium hafniense (strain DSM 10664 / DCB-2).